We begin with the raw amino-acid sequence, 391 residues long: UPF0229 protein CLH_2838 (391 aa).

Disordered stretches follow at residues 1-23 and 75-107; these read MAIFRDRTDKQVDHDRAIEDKRR and VATGTGEEKRGDKIESGSKKAMGKGNKGAGNEE. Basic and acidic residues predominate over residues 80–92; it reads GEEKRGDKIESGS.

This sequence belongs to the UPF0229 family.

The sequence is that of UPF0229 protein CLH_2838 from Clostridium botulinum (strain Alaska E43 / Type E3).